Here is a 320-residue protein sequence, read N- to C-terminus: Bifunctional phosphoglucose/phosphomannose isomerase (320 aa).

One can recognise an SIS domain in the interval 20–153 (IAKDLTPYKG…NLLGVDKDEL (134 aa)). 6 residues coordinate D-fructose 6-phosphate: Gly-37, Ser-38, Ser-80, Ser-82, Thr-85, and Arg-132. Glu-204 (proton acceptor) is an active-site residue. D-fructose 6-phosphate contacts are provided by His-220 and Lys-313. Catalysis depends on His-220, which acts as the Proton donor. Catalysis depends on Lys-313, which acts as the Proton acceptor.

The protein belongs to the PGI/PMI family. Homodimer.

The enzyme catalyses alpha-D-glucose 6-phosphate = beta-D-fructose 6-phosphate. It catalyses the reaction D-mannose 6-phosphate = D-fructose 6-phosphate. In terms of biological role, dual specificity isomerase that catalyzes the isomerization of both glucose-6-phosphate and mannose-6-phosphate to fructose-6-phosphate. The protein is Bifunctional phosphoglucose/phosphomannose isomerase of Aquifex aeolicus (strain VF5).